The chain runs to 469 residues: Tetratricopeptide repeat protein 38 (469 aa).

TPR repeat units follow at residues 107–140 (REKLHVAAVETFADGNLPKAADLWERILQSHPTD), 179–212 (SYVKGMYSFGLLETNFYDQALKVAKEALAVERTD), and 251–284 (CHVYWHWALYLIEKGDYEAALTLYDNHIAPQCFA).

It belongs to the TTC38 family.

This Xenopus laevis (African clawed frog) protein is Tetratricopeptide repeat protein 38 (ttc38).